Reading from the N-terminus, the 209-residue chain is Octanoyltransferase (209 aa).

Residues 30–209 form the BPL/LPL catalytic domain; the sequence is DHEPEIIYLV…IQTEFNKIFK (180 aa). Substrate is bound by residues 69–76, 143–145, and 156–158; these read RGGKFTFH, AIG, and GVA. Cysteine 174 functions as the Acyl-thioester intermediate in the catalytic mechanism.

It belongs to the LipB family.

The protein resides in the cytoplasm. It catalyses the reaction octanoyl-[ACP] + L-lysyl-[protein] = N(6)-octanoyl-L-lysyl-[protein] + holo-[ACP] + H(+). It functions in the pathway protein modification; protein lipoylation via endogenous pathway; protein N(6)-(lipoyl)lysine from octanoyl-[acyl-carrier-protein]: step 1/2. Catalyzes the transfer of endogenously produced octanoic acid from octanoyl-acyl-carrier-protein onto the lipoyl domains of lipoate-dependent enzymes. Lipoyl-ACP can also act as a substrate although octanoyl-ACP is likely to be the physiological substrate. The protein is Octanoyltransferase of Rickettsia rickettsii (strain Iowa).